The chain runs to 553 residues: Cysteine desulfurase IscS (553 aa).

The span at 102-122 (NNISSNNTQYNNNSSNSGSLN) shows a compositional bias: low complexity. The disordered stretch occupies residues 102–125 (NNISSNNTQYNNNSSNSGSLNDEG).

This sequence belongs to the class-V pyridoxal-phosphate-dependent aminotransferase family. NifS/IscS subfamily. Homotetramer. Interacts with Isd11; the interaction enhances cysteine desulfurase activity of IscS. Interacts with IscU. Component of a complex, at least composed of IscS, Isd11 and IscU. Requires pyridoxal 5'-phosphate as cofactor.

Its subcellular location is the mitochondrion. The enzyme catalyses (sulfur carrier)-H + L-cysteine = (sulfur carrier)-SH + L-alanine. The protein operates within cofactor biosynthesis; iron-sulfur cluster biosynthesis. Its function is as follows. Catalyzes sulfur activation and mobilization in iron-sulfur cluster formation (ISC) pathway for iron-sulfur (Fe-S) cluster biogenesis. Active when in complex with a partner protein Isd11. In Plasmodium falciparum (isolate 3D7), this protein is Cysteine desulfurase IscS.